We begin with the raw amino-acid sequence, 236 residues long: 2,3,4,5-tetrahydropyridine-2,6-dicarboxylate N-acetyltransferase (236 aa).

The protein belongs to the transferase hexapeptide repeat family. DapH subfamily.

The enzyme catalyses (S)-2,3,4,5-tetrahydrodipicolinate + acetyl-CoA + H2O = L-2-acetamido-6-oxoheptanedioate + CoA. Its pathway is amino-acid biosynthesis; L-lysine biosynthesis via DAP pathway; LL-2,6-diaminopimelate from (S)-tetrahydrodipicolinate (acetylase route): step 1/3. Functionally, catalyzes the transfer of an acetyl group from acetyl-CoA to tetrahydrodipicolinate. The chain is 2,3,4,5-tetrahydropyridine-2,6-dicarboxylate N-acetyltransferase from Clostridium botulinum (strain 657 / Type Ba4).